A 226-amino-acid chain; its full sequence is MAYPLQLGLQDATSPIMEELTSFHDHTLMIVFLISTLVLYIISLMLTTKLTHTSTMDAQEIETIWTILPAIILIMIALPSLRVLYMMDEINNPALTVKTMGHQWYWSYEYTDYEDLSFDSYMVNTTDLKPGDLRLLEVDNRVVLPMELPIRMLISSEDVLHSWAVPSLGLKTDAIPGRLNQATVSSSRPGLFYGQCSEICGSNHSFMPIVLEMVPLKYFEAWSASM.

The Mitochondrial intermembrane portion of the chain corresponds to 1–14 (MAYPLQLGLQDATS). A helical transmembrane segment spans residues 15 to 45 (PIMEELTSFHDHTLMIVFLISTLVLYIISLM). Residues 46 to 59 (LTTKLTHTSTMDAQ) are Mitochondrial matrix-facing. A helical transmembrane segment spans residues 60 to 87 (EIETIWTILPAIILIMIALPSLRVLYMM). Residues 88 to 226 (DEINNPALTV…KYFEAWSASM (139 aa)) lie on the Mitochondrial intermembrane side of the membrane. His161, Cys196, Glu198, Cys200, His204, and Met207 together coordinate Cu cation. Mg(2+) is bound at residue Glu198. Tyr218 is subject to Phosphotyrosine.

The protein belongs to the cytochrome c oxidase subunit 2 family. As to quaternary structure, component of the cytochrome c oxidase (complex IV, CIV), a multisubunit enzyme composed of 14 subunits. The complex is composed of a catalytic core of 3 subunits MT-CO1, MT-CO2 and MT-CO3, encoded in the mitochondrial DNA, and 11 supernumerary subunits COX4I, COX5A, COX5B, COX6A, COX6B, COX6C, COX7A, COX7B, COX7C, COX8 and NDUFA4, which are encoded in the nuclear genome. The complex exists as a monomer or a dimer and forms supercomplexes (SCs) in the inner mitochondrial membrane with NADH-ubiquinone oxidoreductase (complex I, CI) and ubiquinol-cytochrome c oxidoreductase (cytochrome b-c1 complex, complex III, CIII), resulting in different assemblies (supercomplex SCI(1)III(2)IV(1) and megacomplex MCI(2)III(2)IV(2)). Found in a complex with TMEM177, COA6, COX18, COX20, SCO1 and SCO2. Interacts with TMEM177 in a COX20-dependent manner. Interacts with COX20. Interacts with COX16. Cu cation is required as a cofactor.

Its subcellular location is the mitochondrion inner membrane. It catalyses the reaction 4 Fe(II)-[cytochrome c] + O2 + 8 H(+)(in) = 4 Fe(III)-[cytochrome c] + 2 H2O + 4 H(+)(out). Component of the cytochrome c oxidase, the last enzyme in the mitochondrial electron transport chain which drives oxidative phosphorylation. The respiratory chain contains 3 multisubunit complexes succinate dehydrogenase (complex II, CII), ubiquinol-cytochrome c oxidoreductase (cytochrome b-c1 complex, complex III, CIII) and cytochrome c oxidase (complex IV, CIV), that cooperate to transfer electrons derived from NADH and succinate to molecular oxygen, creating an electrochemical gradient over the inner membrane that drives transmembrane transport and the ATP synthase. Cytochrome c oxidase is the component of the respiratory chain that catalyzes the reduction of oxygen to water. Electrons originating from reduced cytochrome c in the intermembrane space (IMS) are transferred via the dinuclear copper A center (CU(A)) of subunit 2 and heme A of subunit 1 to the active site in subunit 1, a binuclear center (BNC) formed by heme A3 and copper B (CU(B)). The BNC reduces molecular oxygen to 2 water molecules using 4 electrons from cytochrome c in the IMS and 4 protons from the mitochondrial matrix. The protein is Cytochrome c oxidase subunit 2 (MT-CO2) of Perognathus flavus (Silky pocket mouse).